We begin with the raw amino-acid sequence, 359 residues long: Methyltransferase eqxD (359 aa).

S-adenosyl-L-methionine-binding positions include 198–199 (GG), aspartate 224, 248–249 (SF), arginine 264, and arginine 265.

This sequence belongs to the class I-like SAM-binding methyltransferase superfamily. Cation-independent O-methyltransferase family.

The catalysed reaction is trichosetin + S-adenosyl-L-methionine = equisetin + S-adenosyl-L-homocysteine + H(+). Its pathway is mycotoxin biosynthesis. Its function is as follows. Methyltransferase; part of the gene cluster that mediates the biosynthesis of equisetin, a trans-fused decalin-containing tetramic acid with antimicrobial activity. The PKS module of eqxS together with the enoylreductase eqxC catalyze the formation of the polyketide unit which is then conjugated to L-serine by the condensation domain of the eqxS NRPS module. Activity of the Dieckmann cyclase domain (RED) results in release of the Dieckmann product intermediate. Diels-Alderase eqx3 is involved in endo-selective Diels-Alder cycloaddition to form the decalin ring, leading to the production of N-desmethylequisetin also called trichosetin. Subsequent N-methylation is carried out by eqxD to give equisetin. In Fusarium heterosporum, this protein is Methyltransferase eqxD.